Reading from the N-terminus, the 234-residue chain is Urease accessory protein UreG 1 (234 aa).

The disordered stretch occupies residues 1 to 29 (MTRTPTGVPMHLGHTHDAPAAVSADATRP). 42–49 (GPVGSGKT) is a binding site for GTP.

It belongs to the SIMIBI class G3E GTPase family. UreG subfamily. In terms of assembly, homodimer. UreD, UreF and UreG form a complex that acts as a GTP-hydrolysis-dependent molecular chaperone, activating the urease apoprotein by helping to assemble the nickel containing metallocenter of UreC. The UreE protein probably delivers the nickel.

It is found in the cytoplasm. In terms of biological role, facilitates the functional incorporation of the urease nickel metallocenter. This process requires GTP hydrolysis, probably effectuated by UreG. The polypeptide is Urease accessory protein UreG 1 (Streptomyces griseus subsp. griseus (strain JCM 4626 / CBS 651.72 / NBRC 13350 / KCC S-0626 / ISP 5235)).